The following is a 154-amino-acid chain: Superoxide dismutase [Cu-Zn] (154 aa).

Positions 47, 49, and 64 each coordinate Cu cation. An intrachain disulfide couples Cys-58 to Cys-147. Positions 64, 72, 81, and 84 each coordinate Zn(2+). His-121 lines the Cu cation pocket. Arg-144 contributes to the substrate binding site.

This sequence belongs to the Cu-Zn superoxide dismutase family. In terms of assembly, homodimer. Requires Cu cation as cofactor. It depends on Zn(2+) as a cofactor.

The protein resides in the cytoplasm. The enzyme catalyses 2 superoxide + 2 H(+) = H2O2 + O2. Its function is as follows. Destroys radicals which are normally produced within the cells and which are toxic to biological systems. The polypeptide is Superoxide dismutase [Cu-Zn] (SOD1) (Podospora anserina (Pleurage anserina)).